The following is a 321-amino-acid chain: Methionyl-tRNA formyltransferase (321 aa).

112-115 (SILP) provides a ligand contact to (6S)-5,6,7,8-tetrahydrofolate.

This sequence belongs to the Fmt family.

It catalyses the reaction L-methionyl-tRNA(fMet) + (6R)-10-formyltetrahydrofolate = N-formyl-L-methionyl-tRNA(fMet) + (6S)-5,6,7,8-tetrahydrofolate + H(+). Its function is as follows. Attaches a formyl group to the free amino group of methionyl-tRNA(fMet). The formyl group appears to play a dual role in the initiator identity of N-formylmethionyl-tRNA by promoting its recognition by IF2 and preventing the misappropriation of this tRNA by the elongation apparatus. The protein is Methionyl-tRNA formyltransferase of Shewanella piezotolerans (strain WP3 / JCM 13877).